Reading from the N-terminus, the 146-residue chain is Hemoglobin subunit beta (146 aa).

Val1 carries the post-translational modification N-acetylvaline. A Globin domain is found at 2-146 (HLSGGEKSAV…VAHALGHKYH (145 aa)). Thr12 is subject to Phosphothreonine. Lys59 is subject to N6-acetyllysine. His63 provides a ligand contact to heme b. Lys82 carries the N6-acetyllysine modification. His92 contributes to the heme b binding site. Cys93 carries the S-nitrosocysteine modification. Position 144 is an N6-acetyllysine (Lys144).

Belongs to the globin family. Heterotetramer of two alpha chains and two beta chains. Red blood cells.

Its function is as follows. Involved in oxygen transport from the lung to the various peripheral tissues. The chain is Hemoglobin subunit beta (HBB) from Ornithorhynchus anatinus (Duckbill platypus).